Here is a 213-residue protein sequence, read N- to C-terminus: Uridine kinase (213 aa).

Gly13 to Ser20 serves as a coordination point for ATP.

This sequence belongs to the uridine kinase family.

It is found in the cytoplasm. The catalysed reaction is uridine + ATP = UMP + ADP + H(+). The enzyme catalyses cytidine + ATP = CMP + ADP + H(+). It functions in the pathway pyrimidine metabolism; CTP biosynthesis via salvage pathway; CTP from cytidine: step 1/3. The protein operates within pyrimidine metabolism; UMP biosynthesis via salvage pathway; UMP from uridine: step 1/1. The chain is Uridine kinase from Haemophilus influenzae (strain PittGG).